The primary structure comprises 430 residues: T-kininogen 2 (430 aa).

An N-terminal signal peptide occupies residues 1 to 18 (MKLITILLLCSRLLPSLA). Gln19 carries the post-translational modification Pyrrolidone carboxylic acid. The Cystatin kininogen-type 1 domain occupies 28–131 (CNDETVFQAV…TQICNITPGK (104 aa)). 9 disulfides stabilise this stretch: Cys28/Cys404, Cys83/Cys94, Cys107/Cys125, Cys141/Cys144, Cys205/Cys217, Cys228/Cys247, Cys263/Cys266, Cys327/Cys339, and Cys350/Cys369. The N-linked (GlcNAc...) asparagine glycan is linked to Asn82. The Cystatin kininogen-type 2 domain maps to 150-253 (MDSSDLKPVL…SQSCDLYPGD (104 aa)). N-linked (GlcNAc...) asparagine glycosylation is found at Asn168 and Asn204. In terms of domain architecture, Cystatin kininogen-type 3 spans 272–375 (VDSPELKEAL…TVRCQALDMM (104 aa)). N-linked (GlcNAc...) asparagine glycosylation is present at Asn326. A disordered region spans residues 410 to 430 (LSKAGAGPAPDHQAEASTVTP).

Post-translationally, as T-kinin is preceded by a Met instead of an Arg or Lys, it is not released from its precursor by either tissue or plasma kallikrein. Plasma.

Its subcellular location is the secreted. It localises to the extracellular space. Kininogens are plasma glycoproteins with a number of functions: (1) as precursor of the active peptide bradykinin they effect smooth muscle contraction, induction of hypotension and increase of vascular permeability. (2) They play a role in blood coagulation by helping to position optimally prekallikrein and factor XI next to factor XII. (3) They are inhibitor of thiol proteases. The chain is T-kininogen 2 from Rattus norvegicus (Rat).